A 466-amino-acid chain; its full sequence is Fumarate hydratase class II (466 aa).

Residues 99–101 (SGT), 129–132 (HPND), 139–141 (SSN), and Thr187 contribute to the substrate site. Catalysis depends on His188, which acts as the Proton donor/acceptor. The active site involves Ser318. Substrate is bound by residues Ser319 and 324–326 (KVN).

Belongs to the class-II fumarase/aspartase family. Fumarase subfamily. Homotetramer.

It is found in the cytoplasm. The catalysed reaction is (S)-malate = fumarate + H2O. It participates in carbohydrate metabolism; tricarboxylic acid cycle; (S)-malate from fumarate: step 1/1. In terms of biological role, involved in the TCA cycle. Catalyzes the stereospecific interconversion of fumarate to L-malate. This is Fumarate hydratase class II from Thermus thermophilus (strain ATCC BAA-163 / DSM 7039 / HB27).